The following is an 827-amino-acid chain: Rho GTPase-activating protein 6 (827 aa).

The PH domain occupies 18–125 (TVYKSGPLFI…WKAALEQALA (108 aa)). One can recognise a Rho-GAP domain in the interval 172–371 (LALEEIDGSP…ALLEDYGNMI (200 aa)). 2 disordered regions span residues 379-437 (CSTS…SDYA) and 517-561 (YTTS…SSGN). The segment covering 401 to 412 (IVVKHPDLHTLD) has biased composition (basic and acidic residues). The span at 413–423 (IEEGETDDDND) shows a compositional bias: acidic residues. Residues 517–543 (YTTSAEKPASKTTGSSTVNSKRSSSWG) show a composition bias toward polar residues. Positions 560–684 (GNDELLIQRL…HQLSQQRQHH (125 aa)) form a coiled coil.

Its function is as follows. Acts as a GTPase activator for the Rac-type GTPase by converting it to an inactive GDP-bound state. This Arabidopsis thaliana (Mouse-ear cress) protein is Rho GTPase-activating protein 6 (ROPGAP6).